The primary structure comprises 442 residues: Probable folate-biopterin transporter 7 (442 aa).

A run of 12 helical transmembrane segments spans residues 23 to 43 (LGFGFFVQGFRGFPWLGANFF), 64 to 82 (LPMVAKPIYGVVSDSVYFF), 87 to 107 (IPYIAVGALLQAISWLAIAFL), 114 to 134 (ILALSIYLLLSNLGASLVEVA), 158 to 178 (FVWMVSSLGGILGNLLGGIAI), 184 to 204 (QSTFLVFGILALLQFLVTINI), 241 to 261 (IAWIAVSTAVVPVLTGTMFFY), 270 to 290 (ASLLGISKVFGQIAMLLWGFA), 302 to 322 (KLLTAIQVTIAFFVISDLLFV), 335 to 355 (VYVLFFSGFLETLFYFKILPF), 379 to 399 (IALAFIVSGYLGIVLASFVGV), and 410 to 430 (GLAIEACCVGIPLILTSWIYD).

Belongs to the major facilitator superfamily. Folate-biopterin transporter (TC 2.A.71) family.

The protein localises to the membrane. Functionally, could mediate folate transport. This is Probable folate-biopterin transporter 7 from Arabidopsis thaliana (Mouse-ear cress).